The following is a 326-amino-acid chain: Serine hydrolase-like protein (326 aa).

An AB hydrolase-1 domain is found at 44–155 (PVLCLHGWAD…FLPTEVTDMF (112 aa)). Ser-118 is an active-site residue.

The protein belongs to the AB hydrolase superfamily.

Probable serine hydrolase. The chain is Serine hydrolase-like protein (serhl) from Danio rerio (Zebrafish).